The primary structure comprises 858 residues: DNA mismatch repair protein MutS (858 aa).

613–620 is an ATP binding site; it reads GPNMAGKS.

Belongs to the DNA mismatch repair MutS family.

In terms of biological role, this protein is involved in the repair of mismatches in DNA. It is possible that it carries out the mismatch recognition step. This protein has a weak ATPase activity. The polypeptide is DNA mismatch repair protein MutS (Dehalococcoides mccartyi (strain ATCC BAA-2266 / KCTC 15142 / 195) (Dehalococcoides ethenogenes (strain 195))).